Consider the following 200-residue polypeptide: LexA repressor (200 aa).

Active-site for autocatalytic cleavage activity residues include Ser121 and Lys158.

The protein belongs to the peptidase S24 family. Homodimer.

It carries out the reaction Hydrolysis of Ala-|-Gly bond in repressor LexA.. Functionally, binds a consensus sequence 5'-TGTTC-N(4)-GAACA-3'; some genes have a tandem consensus sequence and their binding is cooperative. Binds to the promoters of a number of genes, including lexA and splB. Represses a number of genes involved in the response to DNA damage (SOS response). The chain is LexA repressor from Opitutus terrae (strain DSM 11246 / JCM 15787 / PB90-1).